A 192-amino-acid chain; its full sequence is Der GTPase-activating protein YihI (192 aa).

A disordered region spans residues 1–80 (MSRTKKTRRI…KAAVKEVKDP (80 aa)). 3 stretches are compositionally biased toward basic and acidic residues: residues 9 to 25 (RITD…KPEQ), 37 to 48 (TRYELDAKAREE), and 65 to 80 (DPAE…VKDP).

The protein belongs to the YihI family. Interacts with Der.

Functionally, a GTPase-activating protein (GAP) that modifies Der/EngA GTPase function. May play a role in ribosome biogenesis. This chain is Der GTPase-activating protein YihI, found in Actinobacillus pleuropneumoniae serotype 5b (strain L20).